Here is a 93-residue protein sequence, read N- to C-terminus: Large ribosomal subunit protein bL27 (93 aa).

A propeptide spanning residues 1–10 (MRFLLGLQYF) is cleaved from the precursor. A disordered region spans residues 14–36 (KGVGSTKNGRDSESKRLGAKKSD). Over residues 21-36 (NGRDSESKRLGAKKSD) the composition is skewed to basic and acidic residues.

This sequence belongs to the bacterial ribosomal protein bL27 family. Post-translationally, the N-terminus is cleaved by ribosomal processing cysteine protease Prp.

The protein is Large ribosomal subunit protein bL27 of Mycoplasma capricolum subsp. capricolum (strain California kid / ATCC 27343 / NCTC 10154).